The primary structure comprises 246 residues: tRNA (guanine-N(1)-)-methyltransferase (246 aa).

S-adenosyl-L-methionine is bound by residues Gly114 and 134 to 139 (IGDYIL).

It belongs to the RNA methyltransferase TrmD family. Homodimer.

The protein resides in the cytoplasm. The enzyme catalyses guanosine(37) in tRNA + S-adenosyl-L-methionine = N(1)-methylguanosine(37) in tRNA + S-adenosyl-L-homocysteine + H(+). Its function is as follows. Specifically methylates guanosine-37 in various tRNAs. In Coxiella burnetii (strain RSA 493 / Nine Mile phase I), this protein is tRNA (guanine-N(1)-)-methyltransferase.